The sequence spans 256 residues: 5-keto-4-deoxy-D-glucarate aldolase (256 aa).

The active-site Proton acceptor is His50. Gln151 is a binding site for substrate. Glu153 provides a ligand contact to Mg(2+). Residues Ser178 and Asp179 each contribute to the substrate site. A Mg(2+)-binding site is contributed by Asp179.

It belongs to the HpcH/HpaI aldolase family. KDGluc aldolase subfamily. As to quaternary structure, homohexamer; trimer of dimers. Requires Mg(2+) as cofactor.

It catalyses the reaction 5-dehydro-4-deoxy-D-glucarate = 2-hydroxy-3-oxopropanoate + pyruvate. It carries out the reaction 2-dehydro-3-deoxy-D-glucarate = 2-hydroxy-3-oxopropanoate + pyruvate. It participates in carbohydrate acid metabolism; galactarate degradation; D-glycerate from galactarate: step 2/3. Its function is as follows. Catalyzes the reversible retro-aldol cleavage of both 5-keto-4-deoxy-D-glucarate and 2-keto-3-deoxy-D-glucarate to pyruvate and tartronic semialdehyde. This is 5-keto-4-deoxy-D-glucarate aldolase from Escherichia coli (strain ATCC 8739 / DSM 1576 / NBRC 3972 / NCIMB 8545 / WDCM 00012 / Crooks).